The chain runs to 1506 residues: Transcriptional repressor NF-X1 homolog (1506 aa).

Positions 1–12 are enriched in polar residues; it reads MEESQNIPPKTQ. Disordered regions lie at residues 1–123, 142–164, and 181–282; these read MEES…NNQL, LKSESAKQQQQQQQQSLPTQEPT, and KAFV…KKDI. 2 stretches are compositionally biased toward low complexity: residues 13–103 and 110–121; these read TLNN…SNSN and HNNNYNNNNNNN. The span at 194–209 shows a compositional bias: low complexity; the sequence is NNTNNNNNNNNNNNNN. Residues 217–232 are compositionally biased toward basic and acidic residues; sequence DNNRPQRERRERKPKE. Pro residues predominate over residues 240 to 252; the sequence is PQQPQQPQQPQPQ. Positions 253-263 are enriched in low complexity; that stretch reads PQQQQQSQQQQ. Positions 267-282 are enriched in basic and acidic residues; the sequence is ENNRKKENKLQSKKDI. A PHD-type zinc finger spans residues 363-416; that stretch reads IYECMVCFENVGKNAVIWSCSQCFTMFHSSCIKQWSSKSVTTEGKWKCPGCRYN. The RING-type; degenerate zinc-finger motif lies at 366-414; it reads CMVCFENVGKNAVIWSCSQCFTMFHSSCIKQWSSKSVTTEGKWKCPGCR. NF-X1-type zinc fingers lie at residues 460–478, 515–534, 581–600, 642–661, 739–758, 796–817, and 852–868; these read CPHSCTMLCHPGPCLNCSS, CGNHRCQQQCHSGSCSPCEV, CGNHKCQRTCHKGDCEPCSL, CKQHSCTDRCHTGPCGSCKV, CGVHKCQQLCHSGKCYNCYI, CGHSNEVWEHKCHSGPCPPCTY, and CLSHTCPRICHSGPCLI. Disordered regions lie at residues 897 to 1012 and 1021 to 1040; these read QQSK…VDLN and NEEEERIKKEEKEDDEDEDE. The segment covering 903 to 921 has biased composition (low complexity); sequence TTTTTTTTTTSTTSTTSPK. Acidic residues predominate over residues 925 to 934; sequence KDEELIEDDN. Residues 935 to 980 are compositionally biased toward low complexity; the sequence is NNNNNNNNNNNNNNNNNNNNNNNNNNNNNNNNNNNNNNNNNNNNNN. 2 stretches are compositionally biased toward basic and acidic residues: residues 981 to 1002 and 1021 to 1031; these read EKAEITNECNHDHDHEHEHSDD and NEEEERIKKEE. The NF-X1-type 8 zinc-finger motif lies at 1062-1084; sequence CEHTCHQACHPGEPCPTNISCKQ. 2 disordered regions span residues 1132–1167 and 1447–1473; these read SHTLDNNPNNPNNPNNPNNNTTTTTTTTTTTTSSPT and NQNQNQNNNNNNNNNNNNNSNINIKPT. Low complexity-rich tracts occupy residues 1137 to 1167 and 1447 to 1470; these read NNPNNPNNPNNPNNNTTTTTTTTTTTTSSPT and NQNQNQNNNNNNNNNNNNNSNINI.

The protein belongs to the NFX1 family.

The protein resides in the nucleus. Functionally, may play a role in transcription regulation. The sequence is that of Transcriptional repressor NF-X1 homolog (nfx1) from Dictyostelium discoideum (Social amoeba).